The primary structure comprises 226 residues: MKNIQKILPLYFVAGTQDCRHLGENLSENLLFVLKQALEGGITCFQFRDKGKFSLEHTPSAQKALAINCRDLCREYGVPFIVDDNVDLALEIEADGIHVGQSDMPVQEIRAKTDKPLIIGWSVNRLDEAKIGENLAEIDYFGIGPIFPTQSKENPKPTLGMAFIQTLRNAGITKPLVAIGGVKLAHVKTLREFGADGVAVITAITHADNVQAATKALREASDEYAK.

4-amino-2-methyl-5-(diphosphooxymethyl)pyrimidine contacts are provided by residues 46-50 and Asp-83; that span reads QFRDK. Mg(2+) is bound by residues Asp-84 and Asp-103. Ser-122 provides a ligand contact to 4-amino-2-methyl-5-(diphosphooxymethyl)pyrimidine. 149-151 is a binding site for 2-[(2R,5Z)-2-carboxy-4-methylthiazol-5(2H)-ylidene]ethyl phosphate; that stretch reads TQS. 4-amino-2-methyl-5-(diphosphooxymethyl)pyrimidine is bound at residue Lys-152. Residues Gly-181 and 201 to 202 each bind 2-[(2R,5Z)-2-carboxy-4-methylthiazol-5(2H)-ylidene]ethyl phosphate; that span reads IT.

The protein belongs to the thiamine-phosphate synthase family. Mg(2+) serves as cofactor.

It catalyses the reaction 2-[(2R,5Z)-2-carboxy-4-methylthiazol-5(2H)-ylidene]ethyl phosphate + 4-amino-2-methyl-5-(diphosphooxymethyl)pyrimidine + 2 H(+) = thiamine phosphate + CO2 + diphosphate. The enzyme catalyses 2-(2-carboxy-4-methylthiazol-5-yl)ethyl phosphate + 4-amino-2-methyl-5-(diphosphooxymethyl)pyrimidine + 2 H(+) = thiamine phosphate + CO2 + diphosphate. The catalysed reaction is 4-methyl-5-(2-phosphooxyethyl)-thiazole + 4-amino-2-methyl-5-(diphosphooxymethyl)pyrimidine + H(+) = thiamine phosphate + diphosphate. Its pathway is cofactor biosynthesis; thiamine diphosphate biosynthesis; thiamine phosphate from 4-amino-2-methyl-5-diphosphomethylpyrimidine and 4-methyl-5-(2-phosphoethyl)-thiazole: step 1/1. In terms of biological role, condenses 4-methyl-5-(beta-hydroxyethyl)thiazole monophosphate (THZ-P) and 2-methyl-4-amino-5-hydroxymethyl pyrimidine pyrophosphate (HMP-PP) to form thiamine monophosphate (TMP). The protein is Thiamine-phosphate synthase of Haemophilus influenzae (strain ATCC 51907 / DSM 11121 / KW20 / Rd).